Reading from the N-terminus, the 163-residue chain is Protein-export protein SecB (163 aa).

It belongs to the SecB family. As to quaternary structure, homotetramer, a dimer of dimers. One homotetramer interacts with 1 SecA dimer.

The protein resides in the cytoplasm. One of the proteins required for the normal export of preproteins out of the cell cytoplasm. It is a molecular chaperone that binds to a subset of precursor proteins, maintaining them in a translocation-competent state. It also specifically binds to its receptor SecA. The polypeptide is Protein-export protein SecB (Pseudomonas aeruginosa (strain LESB58)).